The following is a 284-amino-acid chain: Ribosomal RNA small subunit methyltransferase A (284 aa).

S-adenosyl-L-methionine-binding residues include N12, L14, G38, E59, D81, and N106.

This sequence belongs to the class I-like SAM-binding methyltransferase superfamily. rRNA adenine N(6)-methyltransferase family. RsmA subfamily.

It localises to the cytoplasm. It carries out the reaction adenosine(1518)/adenosine(1519) in 16S rRNA + 4 S-adenosyl-L-methionine = N(6)-dimethyladenosine(1518)/N(6)-dimethyladenosine(1519) in 16S rRNA + 4 S-adenosyl-L-homocysteine + 4 H(+). Specifically dimethylates two adjacent adenosines (A1518 and A1519) in the loop of a conserved hairpin near the 3'-end of 16S rRNA in the 30S particle. May play a critical role in biogenesis of 30S subunits. The protein is Ribosomal RNA small subunit methyltransferase A of Phytoplasma australiense.